The chain runs to 411 residues: Tyrosine--tRNA ligase (411 aa).

Residue tyrosine 34 participates in L-tyrosine binding. A 'HIGH' region motif is present at residues 39-48 (CTATSLHIGS). Tyrosine 171 and glutamine 175 together coordinate L-tyrosine. Residues 231–235 (KMGKT) carry the 'KMSKS' region motif. Lysine 234 contacts ATP. The 67-residue stretch at 345-411 (ISAYNLFYNA…GKKRHILVKV (67 aa)) folds into the S4 RNA-binding domain.

It belongs to the class-I aminoacyl-tRNA synthetase family. TyrS type 1 subfamily. As to quaternary structure, homodimer.

Its subcellular location is the cytoplasm. It carries out the reaction tRNA(Tyr) + L-tyrosine + ATP = L-tyrosyl-tRNA(Tyr) + AMP + diphosphate + H(+). Catalyzes the attachment of tyrosine to tRNA(Tyr) in a two-step reaction: tyrosine is first activated by ATP to form Tyr-AMP and then transferred to the acceptor end of tRNA(Tyr). This is Tyrosine--tRNA ligase from Rickettsia prowazekii (strain Madrid E).